We begin with the raw amino-acid sequence, 734 residues long: Ribosome-releasing factor 2, mitochondrial (734 aa).

The transit peptide at 1–25 (MLQYCLLRRYRFLLRQHAQVIKRCY) directs the protein to the mitochondrion. A tr-type G domain is found at 27-303 (GDIRNIGILA…AVNAYLPMPE (277 aa)). Residues 36–43 (AHIDAGKT), 100–104 (DTPGH), and 154–157 (NKMD) each bind GTP.

The protein belongs to the TRAFAC class translation factor GTPase superfamily. Classic translation factor GTPase family. EF-G/EF-2 subfamily.

Its subcellular location is the mitochondrion. Mitochondrial GTPase that mediates the disassembly of ribosomes from messenger RNA at the termination of mitochondrial protein biosynthesis. Not involved in the GTP-dependent ribosomal translocation step during translation elongation. In Drosophila grimshawi (Hawaiian fruit fly), this protein is Ribosome-releasing factor 2, mitochondrial.